The following is a 515-amino-acid chain: Maturase K (515 aa).

This sequence belongs to the intron maturase 2 family. MatK subfamily.

The protein localises to the plastid. The protein resides in the chloroplast. Usually encoded in the trnK tRNA gene intron. Probably assists in splicing its own and other chloroplast group II introns. This chain is Maturase K, found in Pinus roxburghii (Chir pine).